A 222-amino-acid chain; its full sequence is Phosphoenolpyruvate guanylyltransferase (222 aa).

Phosphoenolpyruvate-binding residues include Thr-134, Gly-150, and Ser-153.

This sequence belongs to the CofC family.

It carries out the reaction phosphoenolpyruvate + GTP + H(+) = enolpyruvoyl-2-diphospho-5'-guanosine + diphosphate. It functions in the pathway cofactor biosynthesis; coenzyme F420 biosynthesis. Guanylyltransferase that catalyzes the activation of phosphoenolpyruvate (PEP) as enolpyruvoyl-2-diphospho-5'-guanosine, via the condensation of PEP with GTP. It is involved in the biosynthesis of coenzyme F420, a hydride carrier cofactor. The polypeptide is Phosphoenolpyruvate guanylyltransferase (Roseiflexus sp. (strain RS-1)).